Consider the following 281-residue polypeptide: Glyceraldehyde dehydrogenase medium chain (281 aa).

Positions 1-176 constitute an FAD-binding PCMH-type domain; that stretch reads MYPPEFSYVR…TQIEVPVLDG (176 aa). FAD is bound by residues 31–35 and 110–114; these read AGGQS and TIGGA.

As to quaternary structure, heterotrimer composed of a large chain (CutA), a medium chain (CutB) and a small chain (CutC). Requires FAD as cofactor.

The protein resides in the cytoplasm. It catalyses the reaction D-glyceraldehyde + A + H2O = (R)-glycerate + AH2 + H(+). Functionally, component of the glyceraldehyde dehydrogenase which is involved the nonphosphorylated Entner-Doudoroff pathway. Catalyzes the oxidation of D-glyceraldehyde to yield glycerate. When the artificial electron acceptor 2,6-dichlorophenol-indophenol (Cl2Ind) is used, the enzyme shows a broad substrate range (glyceraldehyde-3-phosphate, formaldehyde, acetaldehyde, propionaldehyde and isobutyraldehyde), but is most active with D-glyceraldehyde. It is not known which acceptor is utilized in vivo. The sequence is that of Glyceraldehyde dehydrogenase medium chain (cutB) from Sulfolobus acidocaldarius (strain ATCC 33909 / DSM 639 / JCM 8929 / NBRC 15157 / NCIMB 11770).